The chain runs to 362 residues: Histidinol-phosphate aminotransferase (362 aa).

The residue at position 218 (K218) is an N6-(pyridoxal phosphate)lysine.

This sequence belongs to the class-II pyridoxal-phosphate-dependent aminotransferase family. Histidinol-phosphate aminotransferase subfamily. Homodimer. Pyridoxal 5'-phosphate is required as a cofactor.

It catalyses the reaction L-histidinol phosphate + 2-oxoglutarate = 3-(imidazol-4-yl)-2-oxopropyl phosphate + L-glutamate. It participates in amino-acid biosynthesis; L-histidine biosynthesis; L-histidine from 5-phospho-alpha-D-ribose 1-diphosphate: step 7/9. The sequence is that of Histidinol-phosphate aminotransferase from Xanthomonas campestris pv. campestris (strain ATCC 33913 / DSM 3586 / NCPPB 528 / LMG 568 / P 25).